The chain runs to 1137 residues: Phytochrome C (1137 aa).

Residues M1–A18 show a composition bias toward low complexity. A disordered region spans residues M1 to V27. Residues N217–V400 enclose the GAF domain. C322 contributes to the phytochromobilin binding site. 2 consecutive PAS domains span residues V620 to I690 and I750 to S824. The Histidine kinase domain occupies Y904–Q1124.

This sequence belongs to the phytochrome family. Homodimer. In terms of processing, contains one covalently linked phytochromobilin chromophore.

Functionally, regulatory photoreceptor which exists in two forms that are reversibly interconvertible by light: the Pr form that absorbs maximally in the red region of the spectrum and the Pfr form that absorbs maximally in the far-red region. Photoconversion of Pr to Pfr induces an array of morphogenic responses, whereas reconversion of Pfr to Pr cancels the induction of those responses. Pfr controls the expression of a number of nuclear genes including those encoding the small subunit of ribulose-bisphosphate carboxylase, chlorophyll A/B binding protein, protochlorophyllide reductase, rRNA, etc. It also controls the expression of its own gene(s) in a negative feedback fashion. The sequence is that of Phytochrome C (PHYC) from Oryza sativa subsp. japonica (Rice).